Here is an 873-residue protein sequence, read N- to C-terminus: Protein translocase subunit SecA (873 aa).

ATP-binding positions include Q88, 106–110 (GEGKT), and D501. Zn(2+)-binding residues include C856, C858, C867, and H868.

Belongs to the SecA family. Monomer and homodimer. Part of the essential Sec protein translocation apparatus which comprises SecA, SecYEG and auxiliary proteins SecDF-YajC and YidC. The cofactor is Zn(2+).

It localises to the cell inner membrane. It is found in the cytoplasm. The enzyme catalyses ATP + H2O + cellular proteinSide 1 = ADP + phosphate + cellular proteinSide 2.. In terms of biological role, part of the Sec protein translocase complex. Interacts with the SecYEG preprotein conducting channel. Has a central role in coupling the hydrolysis of ATP to the transfer of proteins into and across the cell membrane, serving both as a receptor for the preprotein-SecB complex and as an ATP-driven molecular motor driving the stepwise translocation of polypeptide chains across the membrane. The sequence is that of Protein translocase subunit SecA from Anaplasma phagocytophilum (strain HZ).